The following is a 421-amino-acid chain: Imidazolonepropionase (421 aa).

Fe(3+) contacts are provided by histidine 81 and histidine 83. Residues histidine 81 and histidine 83 each coordinate Zn(2+). The 4-imidazolone-5-propanoate site is built by arginine 90, tyrosine 153, and histidine 186. Residue tyrosine 153 participates in N-formimidoyl-L-glutamate binding. Histidine 251 is a Fe(3+) binding site. Residue histidine 251 participates in Zn(2+) binding. Glutamate 254 is a binding site for 4-imidazolone-5-propanoate. Residue aspartate 326 participates in Fe(3+) binding. Aspartate 326 is a binding site for Zn(2+). N-formimidoyl-L-glutamate-binding residues include asparagine 328 and glycine 330. Position 331 (serine 331) interacts with 4-imidazolone-5-propanoate.

This sequence belongs to the metallo-dependent hydrolases superfamily. HutI family. Zn(2+) serves as cofactor. The cofactor is Fe(3+).

The protein resides in the cytoplasm. The catalysed reaction is 4-imidazolone-5-propanoate + H2O = N-formimidoyl-L-glutamate. Its pathway is amino-acid degradation; L-histidine degradation into L-glutamate; N-formimidoyl-L-glutamate from L-histidine: step 3/3. In terms of biological role, catalyzes the hydrolytic cleavage of the carbon-nitrogen bond in imidazolone-5-propanoate to yield N-formimidoyl-L-glutamate. It is the third step in the universal histidine degradation pathway. This is Imidazolonepropionase from Streptococcus sanguinis (strain SK36).